Reading from the N-terminus, the 254-residue chain is NAD-dependent protein deacylase (254 aa).

The Deacetylase sirtuin-type domain occupies 1–250 (MERLEEARKR…LPPSPEDQAE (250 aa)). 22–41 (GAGISKPSGIPTFRDAEGLW) serves as a coordination point for NAD(+). The substrate site is built by Tyr-66 and Arg-69. NAD(+) is bound at residue 104–107 (QNVD). His-122 functions as the Proton acceptor in the catalytic mechanism. Cys-130, Cys-133, Cys-149, and Cys-152 together coordinate Zn(2+). NAD(+) contacts are provided by residues 189–191 (GTS), 215–217 (NPE), and Ala-233.

Belongs to the sirtuin family. Class III subfamily. Zn(2+) serves as cofactor.

The protein resides in the cytoplasm. The catalysed reaction is N(6)-acetyl-L-lysyl-[protein] + NAD(+) + H2O = 2''-O-acetyl-ADP-D-ribose + nicotinamide + L-lysyl-[protein]. The enzyme catalyses N(6)-succinyl-L-lysyl-[protein] + NAD(+) + H2O = 2''-O-succinyl-ADP-D-ribose + nicotinamide + L-lysyl-[protein]. NAD-dependent lysine deacetylase and desuccinylase that specifically removes acetyl and succinyl groups on target proteins. Modulates the activities of several proteins which are inactive in their acylated form. The chain is NAD-dependent protein deacylase from Thermus thermophilus (strain ATCC BAA-163 / DSM 7039 / HB27).